The sequence spans 493 residues: Farnesoate epoxidase (493 aa).

The N-terminal stretch at 1–24 (MLALIVLCFILFFYIISRRHRGLC) is a signal peptide. Cys-433 contacts heme.

Belongs to the cytochrome P450 family. Heme is required as a cofactor. In terms of tissue distribution, constitutively expressed in corpora allata from the first instar larval to adult stages.

The catalysed reaction is (2E,6E)-farnesoate + reduced [NADPH--hemoprotein reductase] + O2 = juvenile hormone III carboxylate + oxidized [NADPH--hemoprotein reductase] + H2O + H(+). Its function is as follows. Catalyzes the conversion of farnesoate to juvenile hormone III acid in juvenile hormone biosynthesis. This is Farnesoate epoxidase from Bombyx mori (Silk moth).